The following is an 848-amino-acid chain: MTENTPGTSAPERFDPATADTRWQRVWDEKQSFRADDSSTKPRSYVLEMFPYPSGRIHIGHVRNYTMGDVLARYKRMRGFEVLHPMGWDAFGMPAENAAMEKGVHPGGWTRDNIANMKAQLKRLGFALDWSREIATCEPEYYGQEQALFLDLYAAGLVYRKESTVNWDPVDMTVLANEQVIDGRGWRSGALVEKRKLNQWFLKITDFADELLEGLSTLDKWPEKVRVMQENWIGKSQGLQFRFDLSNGETVEVYTTRPDTIFGASFVAVAPDHPIAQGVAAINCEAANFIALCKKGGTTAAELETAEKLGFDTGIGARHPLTGKYLPVYIANFVLMEYGTGAIMAVPGHDQRDFDFATKYALPILRVVAADAADADKPFAGEAEAGDGVLVNSGFLDGMNVADAKAAVIVRAESEGWGEGKTVWRLRDWGVSRQRYWGTPIPFIHCEVCGVVPVPKKHLPVTLPEDVSFDVPGNPLDRHPTWKHVDCPQCGHPARRETDTLDTFVDSSWYFLRFASQPEDRPFDPEEIKRWLPVEQYIGGIEHAILHLLYARFWTRALARIGKVEVTEPFGSLFTQGMVTHETYERRNPENGQPIFFSPGEVERTGEGATLKVDGAPVEIGRVIKMSKSKKNVVDPDEIVAKYGADAIRWFMLSDSPPERDLPWSEAGIEGCARFVQRLWRLFGQYDAAATGEDKALDRKAHQTVHAVASDIEALGFNKAVARIYELTGAVEKAAPSASRSDAIRKLLLLVAPMMPHLAEEAYARFGSSLIADAAWPEVDPALLVDDEVIVAVQVKGKLRDTLTVAKGTPKEDLERLALASEKVQRALEGAEVKKVIVVPDRLVNLVA.

Residues 1–21 (MTENTPGTSAPERFDPATADT) form a disordered region. The short motif at 51–61 (PYPSGRIHIGH) is the 'HIGH' region element. The 'KMSKS' region signature appears at 625-629 (KMSKS). Residue K628 participates in ATP binding.

Belongs to the class-I aminoacyl-tRNA synthetase family.

Its subcellular location is the cytoplasm. The enzyme catalyses tRNA(Leu) + L-leucine + ATP = L-leucyl-tRNA(Leu) + AMP + diphosphate. This chain is Leucine--tRNA ligase, found in Novosphingobium aromaticivorans (strain ATCC 700278 / DSM 12444 / CCUG 56034 / CIP 105152 / NBRC 16084 / F199).